The sequence spans 397 residues: Elongation factor Tu (397 aa).

The 197-residue stretch at Lys-10–Gln-206 folds into the tr-type G domain. The G1 stretch occupies residues Gly-19 to Thr-26. Position 19–26 (Gly-19–Thr-26) interacts with GTP. Residue Thr-26 coordinates Mg(2+). The tract at residues Gly-61–Ser-65 is G2. The tract at residues Asp-82–Gly-85 is G3. GTP-binding positions include Asp-82–His-86 and Asn-137–Asp-140. A G4 region spans residues Asn-137–Asp-140. The segment at Ser-175–Leu-177 is G5.

It belongs to the TRAFAC class translation factor GTPase superfamily. Classic translation factor GTPase family. EF-Tu/EF-1A subfamily. As to quaternary structure, monomer.

The protein localises to the cytoplasm. It catalyses the reaction GTP + H2O = GDP + phosphate + H(+). Its function is as follows. GTP hydrolase that promotes the GTP-dependent binding of aminoacyl-tRNA to the A-site of ribosomes during protein biosynthesis. In Lachnoclostridium phytofermentans (strain ATCC 700394 / DSM 18823 / ISDg) (Clostridium phytofermentans), this protein is Elongation factor Tu.